The following is a 229-amino-acid chain: Sugar fermentation stimulation protein homolog (229 aa).

This sequence belongs to the SfsA family.

The sequence is that of Sugar fermentation stimulation protein homolog from Carboxydothermus hydrogenoformans (strain ATCC BAA-161 / DSM 6008 / Z-2901).